Here is a 558-residue protein sequence, read N- to C-terminus: Glucose-6-phosphate isomerase (558 aa).

N-acetylalanine is present on A2. K12 is subject to N6-acetyllysine. An N6-(2-hydroxyisobutyryl)lysine modification is found at K34. S107 bears the Phosphoserine mark. T109 is subject to Phosphothreonine. K142 is modified (N6-acetyllysine). 159–160 serves as a coordination point for D-glucose 6-phosphate; it reads GS. A Phosphoserine; by CK2 modification is found at S185. D-glucose 6-phosphate is bound at residue 210–215; the sequence is SKTFTT. T250 is subject to Phosphothreonine. Residues Q354, E358, and H389 each coordinate D-glucose 6-phosphate. E358 serves as the catalytic Proton donor. Residue H389 is part of the active site. Residue K454 is modified to N6-acetyllysine; alternate. N6-malonyllysine; alternate is present on K454. N6-succinyllysine; alternate is present on K454. S455 carries the post-translational modification Phosphoserine. K519 lines the D-glucose 6-phosphate pocket. The active site involves K519.

This sequence belongs to the GPI family. Homodimer; in the catalytically active form. Monomer in the secreted form. Phosphorylation at Ser-185 by CK2 has been shown to decrease enzymatic activity and may contribute to secretion by a non-classical secretory pathway. In terms of processing, ISGylated.

It localises to the cytoplasm. It is found in the secreted. The enzyme catalyses alpha-D-glucose 6-phosphate = beta-D-fructose 6-phosphate. The protein operates within carbohydrate degradation; glycolysis; D-glyceraldehyde 3-phosphate and glycerone phosphate from D-glucose: step 2/4. In terms of biological role, in the cytoplasm, catalyzes the conversion of glucose-6-phosphate to fructose-6-phosphate, the second step in glycolysis, and the reverse reaction during gluconeogenesis. Besides it's role as a glycolytic enzyme, also acts as a secreted cytokine: acts as an angiogenic factor (AMF) that stimulates endothelial cell motility. Acts as a neurotrophic factor, neuroleukin, for spinal and sensory neurons. It is secreted by lectin-stimulated T-cells and induces immunoglobulin secretion. The chain is Glucose-6-phosphate isomerase from Pongo abelii (Sumatran orangutan).